A 315-amino-acid polypeptide reads, in one-letter code: 7,8-didemethyl-8-hydroxy-5-deazariboflavin synthase (315 aa).

Residues 6–237 (ITYSPAFTLV…EDITIQIPAN (232 aa)) form the Radical SAM core domain. Residues Cys20, Cys24, and Cys27 each contribute to the [4Fe-4S] cluster site.

Belongs to the radical SAM superfamily. CofG family. As to quaternary structure, consists of two subunits, CofG and CofH. Requires [4Fe-4S] cluster as cofactor.

It catalyses the reaction 5-amino-5-(4-hydroxybenzyl)-6-(D-ribitylimino)-5,6-dihydrouracil + S-adenosyl-L-methionine = 7,8-didemethyl-8-hydroxy-5-deazariboflavin + 5'-deoxyadenosine + L-methionine + NH4(+) + H(+). Its pathway is cofactor biosynthesis; coenzyme F0 biosynthesis. Functionally, catalyzes the radical-mediated synthesis of 7,8-didemethyl-8-hydroxy-5-deazariboflavin from 5-amino-5-(4-hydroxybenzyl)-6-(D-ribitylimino)-5,6-dihydrouracil. This chain is 7,8-didemethyl-8-hydroxy-5-deazariboflavin synthase, found in Thermosynechococcus vestitus (strain NIES-2133 / IAM M-273 / BP-1).